The primary structure comprises 145 residues: D-aminoacyl-tRNA deacylase (145 aa).

A Gly-cisPro motif, important for rejection of L-amino acids motif is present at residues 137-138 (GP).

Belongs to the DTD family. Homodimer.

It localises to the cytoplasm. The catalysed reaction is glycyl-tRNA(Ala) + H2O = tRNA(Ala) + glycine + H(+). It carries out the reaction a D-aminoacyl-tRNA + H2O = a tRNA + a D-alpha-amino acid + H(+). An aminoacyl-tRNA editing enzyme that deacylates mischarged D-aminoacyl-tRNAs. Also deacylates mischarged glycyl-tRNA(Ala), protecting cells against glycine mischarging by AlaRS. Acts via tRNA-based rather than protein-based catalysis; rejects L-amino acids rather than detecting D-amino acids in the active site. By recycling D-aminoacyl-tRNA to D-amino acids and free tRNA molecules, this enzyme counteracts the toxicity associated with the formation of D-aminoacyl-tRNA entities in vivo and helps enforce protein L-homochirality. The sequence is that of D-aminoacyl-tRNA deacylase from Pseudomonas entomophila (strain L48).